A 498-amino-acid chain; its full sequence is MHTHNNFKTPSDEDELDDLDEDMVVGVIAEIEQEVLNESDSDNDEYDLVDMGAPVPDNDGDVSYDGNDSISSDDSFDPNAADSDSDDSMLDEAGGGSAGGATSAKKRKDDDNPSGSNKQPEATFDLDEDDETDETVRAMIAAIKKPRSSPPEIKLEDFITDICFHPDRDIIALATIIGDVHLYEYDNEANKLLRTIEVHSKACRDVEFTEDGRFLLTCSKDKCVMVTDMETEKLKKLYETAHDDAINTLHVLNENLFASGDDAGTVKLWDLRTKNAIFELKELEDQITQLTTNEQSKLLLATSADGYLTTFNISARKMYVQSEPYEEELNCMGVYRGDSKLVVGTSKGRLYTYNWGQFGYHCDMYPGIKSPISLMIPITDRIACVAGEDGNIRACHIAPYRNLGVVGQHNMPIESLDVNASGELIASSSHNNDVRFWNVKYFEDFGEIKYNEKHNAYKEQRHNLPSSKCSNTSDFFADLTKEDADGDDDPCAGPSNMS.

The segment at 1–131 (MHTHNNFKTP…ATFDLDEDDE (131 aa)) is disordered. 2 stretches are compositionally biased toward acidic residues: residues 12-23 (DEDELDDLDEDM) and 31-48 (IEQE…EYDL). WD repeat units lie at residues 154-193 (KLED…NKLL), 198-237 (VHSK…LKKL), 241-279 (AHDD…AIFE), 282-321 (ELED…MYVQ), 324-363 (PYEE…YHCD), and 408-447 (QHNM…DFGE).

Belongs to the WD repeat WDR55 family.

This Drosophila simulans (Fruit fly) protein is WD repeat-containing protein 55 homolog.